The primary structure comprises 429 residues: MAFLALGINHKTASVDVRERVAFTPEQLVEALQQLCRLTDSREAAILSTCNRSELYIEQEHLSADVVLRWLADYHHLDLDDLRASAYVHEDDAAVRHMMRVASGLDSLVLGEPQILGQMKSAYAVAREAGTVGPLLGRLFQATFNSAKQVRTDTAIGENPVSVAFAAVSLAKQIFSDLQRSQALLIGAGETITLVARHLHDLGVKRIVVANRTLERASILAEQFGAHAVLLADIPAELVRSDIVISSTASQLPILGKGAVESALKLRKHKPIFMVDIAVPRDIEPEVGELDDVYLYSVDDLHEVVAENLKSRQGAAQAAEEMVSAGADDFMVRLRELAAVDVLKAYRQQGERLRDEELLKAQRLLANGSSAEDVLVQLARGLTNKLLHAPSVQLKKLTAEGRLDALAMAQELFALGEGASDSSSDKKLQ.

Substrate is bound by residues 49–52 (TCNR), S107, 112–114 (EPQ), and Q118. C50 acts as the Nucleophile in catalysis. 187–192 (GAGETI) is an NADP(+) binding site.

The protein belongs to the glutamyl-tRNA reductase family. As to quaternary structure, homodimer.

It catalyses the reaction (S)-4-amino-5-oxopentanoate + tRNA(Glu) + NADP(+) = L-glutamyl-tRNA(Glu) + NADPH + H(+). It participates in porphyrin-containing compound metabolism; protoporphyrin-IX biosynthesis; 5-aminolevulinate from L-glutamyl-tRNA(Glu): step 1/2. Catalyzes the NADPH-dependent reduction of glutamyl-tRNA(Glu) to glutamate 1-semialdehyde (GSA). This chain is Glutamyl-tRNA reductase, found in Pseudomonas fluorescens (strain SBW25).